The following is a 466-amino-acid chain: 3-isopropylmalate dehydratase large subunit (466 aa).

Positions 347, 407, and 410 each coordinate [4Fe-4S] cluster.

The protein belongs to the aconitase/IPM isomerase family. LeuC type 1 subfamily. As to quaternary structure, heterodimer of LeuC and LeuD. [4Fe-4S] cluster serves as cofactor.

It catalyses the reaction (2R,3S)-3-isopropylmalate = (2S)-2-isopropylmalate. It participates in amino-acid biosynthesis; L-leucine biosynthesis; L-leucine from 3-methyl-2-oxobutanoate: step 2/4. In terms of biological role, catalyzes the isomerization between 2-isopropylmalate and 3-isopropylmalate, via the formation of 2-isopropylmaleate. In Shewanella sediminis (strain HAW-EB3), this protein is 3-isopropylmalate dehydratase large subunit.